The chain runs to 292 residues: Hypersensitive-induced response protein 4 (292 aa).

The N-myristoyl glycine moiety is linked to residue Gly2.

As to quaternary structure, self-interacts and forms heteromers. Interacts with NB-LRR class of R proteins before R proteins (e.g. RPS2 or RPM1) are activated by the effectors.

It is found in the cell membrane. In Arabidopsis thaliana (Mouse-ear cress), this protein is Hypersensitive-induced response protein 4 (HIR4).